A 450-amino-acid polypeptide reads, in one-letter code: Succinate-semialdehyde dehydrogenase (450 aa).

Trp-119–Asn-120 is an NADP(+) binding site. Arg-128 is a binding site for substrate. NADP(+) contacts are provided by residues Lys-143–Lys-146 and Gly-197–Ser-198. Glu-219 (proton acceptor) is an active-site residue. Leu-220 provides a ligand contact to NADP(+). Residues Arg-247 and Cys-253 each contribute to the substrate site. The active-site Nucleophile is the Cys-253. Residue Glu-350 coordinates NADP(+). A substrate-binding site is contributed by Ser-410.

Belongs to the aldehyde dehydrogenase family. In terms of assembly, homodimer.

The enzyme catalyses succinate semialdehyde + NAD(+) + H2O = succinate + NADH + 2 H(+). It catalyses the reaction succinate semialdehyde + NADP(+) + H2O = succinate + NADPH + 2 H(+). It participates in alkaloid degradation; nicotine degradation. Catalyzes the NAD(P)(+)-dependent oxidation of succinate semialdehyde to succinate, which may enter the citric acid cycle. Is involved in the catabolism of 4-methylaminobutanoate produced from nicotine. Acts preferentially with NADP(+) as cosubstrate but can also use NAD(+). To a lesser extent, is active also towards butyraldehyde (8.5% of the activity observed with succinate semialdehyde) and propionaldehyde (1.6% of the activity observed with succinate semialdehyde) as substrates. The sequence is that of Succinate-semialdehyde dehydrogenase (sad) from Paenarthrobacter nicotinovorans (Arthrobacter nicotinovorans).